The following is a 383-amino-acid chain: Hippurate hydrolase (383 aa).

This sequence belongs to the peptidase M20 family.

It carries out the reaction N-benzoylglycine + H2O = benzoate + glycine. In terms of biological role, cleaves hippuric acid into benzoic acid and glycine. In Campylobacter jejuni subsp. jejuni serotype O:2 (strain ATCC 700819 / NCTC 11168), this protein is Hippurate hydrolase.